The chain runs to 350 residues: Hydroxymethylglutaryl-CoA synthase (350 aa).

Residue glutamate 83 is the Proton donor/acceptor of the active site. Cysteine 115 serves as the catalytic Acyl-thioester intermediate. Cysteine 115 and threonine 156 together coordinate (3S)-3-hydroxy-3-methylglutaryl-CoA. Arginine 204 is a binding site for CoA. (3S)-3-hydroxy-3-methylglutaryl-CoA is bound by residues threonine 206 and histidine 239. Catalysis depends on histidine 239, which acts as the Proton donor/acceptor. CoA is bound at residue lysine 244. (3S)-3-hydroxy-3-methylglutaryl-CoA is bound by residues asparagine 271 and serine 301.

The protein belongs to the thiolase-like superfamily. Archaeal HMG-CoA synthase family. As to quaternary structure, interacts with acetoacetyl-CoA thiolase that catalyzes the precedent step in the pathway and with a DUF35 protein. The acetoacetyl-CoA thiolase/HMG-CoA synthase complex channels the intermediate via a fused CoA-binding site, which allows for efficient coupling of the endergonic thiolase reaction with the exergonic HMGCS reaction.

It carries out the reaction acetoacetyl-CoA + acetyl-CoA + H2O = (3S)-3-hydroxy-3-methylglutaryl-CoA + CoA + H(+). Its pathway is metabolic intermediate biosynthesis; (R)-mevalonate biosynthesis; (R)-mevalonate from acetyl-CoA: step 2/3. Catalyzes the condensation of acetyl-CoA with acetoacetyl-CoA to form 3-hydroxy-3-methylglutaryl-CoA (HMG-CoA). Functions in the mevalonate (MVA) pathway leading to isopentenyl diphosphate (IPP), a key precursor for the biosynthesis of isoprenoid compounds that are building blocks of archaeal membrane lipids. This is Hydroxymethylglutaryl-CoA synthase from Pyrococcus horikoshii (strain ATCC 700860 / DSM 12428 / JCM 9974 / NBRC 100139 / OT-3).